The primary structure comprises 432 residues: Probable N-acetylmuramoyl-L-alanine amidase AmiB (432 aa).

The N-terminal stretch at 1-20 (MKTKILFFLFFSTFSFSIFA) is a signal peptide. Residues 25 to 244 (IAIDPGHGGK…IAYMIYEGLV (220 aa)) form the MurNAc-LAA domain. LysM domains follow at residues 292 to 335 (IRHI…SIKI) and 385 to 429 (LYHK…KIKL).

Belongs to the N-acetylmuramoyl-L-alanine amidase 3 family.

The protein localises to the periplasm. It catalyses the reaction Hydrolyzes the link between N-acetylmuramoyl residues and L-amino acid residues in certain cell-wall glycopeptides.. Cell-wall hydrolase involved in septum cleavage during cell division. This chain is Probable N-acetylmuramoyl-L-alanine amidase AmiB (amiB), found in Haemophilus influenzae (strain ATCC 51907 / DSM 11121 / KW20 / Rd).